A 152-amino-acid polypeptide reads, in one-letter code: Urease accessory protein UreE (152 aa).

Belongs to the UreE family.

The protein localises to the cytoplasm. Its function is as follows. Involved in urease metallocenter assembly. Binds nickel. Probably functions as a nickel donor during metallocenter assembly. This chain is Urease accessory protein UreE, found in Citrobacter koseri (strain ATCC BAA-895 / CDC 4225-83 / SGSC4696).